The chain runs to 629 residues: tRNA uridine 5-carboxymethylaminomethyl modification enzyme MnmG (629 aa).

FAD contacts are provided by residues Gly14–Gly19, Val126, and Ser181. Gly273–Phe287 contributes to the NAD(+) binding site. Gln370 serves as a coordination point for FAD.

The protein belongs to the MnmG family. Homodimer. Heterotetramer of two MnmE and two MnmG subunits. Requires FAD as cofactor.

It is found in the cytoplasm. In terms of biological role, NAD-binding protein involved in the addition of a carboxymethylaminomethyl (cmnm) group at the wobble position (U34) of certain tRNAs, forming tRNA-cmnm(5)s(2)U34. The protein is tRNA uridine 5-carboxymethylaminomethyl modification enzyme MnmG of Geobacillus kaustophilus (strain HTA426).